The chain runs to 455 residues: Probable 1,4-beta-D-glucan cellobiohydrolase A (455 aa).

The N-terminal stretch at 1 to 17 is a signal peptide; it reads MHQRALLFSAFWTAVQA. An N-linked (GlcNAc...) asparagine glycan is attached at Asn81. Glu227 acts as the Nucleophile in catalysis. Glu232 serves as the catalytic Proton donor. N-linked (GlcNAc...) asparagine glycosylation is present at Asn285.

The protein belongs to the glycosyl hydrolase 7 (cellulase C) family.

Its subcellular location is the secreted. The catalysed reaction is Hydrolysis of (1-&gt;4)-beta-D-glucosidic linkages in cellulose and cellotetraose, releasing cellobiose from the non-reducing ends of the chains.. Its function is as follows. The biological conversion of cellulose to glucose generally requires three types of hydrolytic enzymes: (1) Endoglucanases which cut internal beta-1,4-glucosidic bonds; (2) Exocellobiohydrolases that cut the disaccharide cellobiose from the non-reducing end of the cellulose polymer chain; (3) Beta-1,4-glucosidases which hydrolyze the cellobiose and other short cello-oligosaccharides to glucose. This Aspergillus flavus (strain ATCC 200026 / FGSC A1120 / IAM 13836 / NRRL 3357 / JCM 12722 / SRRC 167) protein is Probable 1,4-beta-D-glucan cellobiohydrolase A (cbhA).